A 575-amino-acid polypeptide reads, in one-letter code: Proline--tRNA ligase (575 aa).

This sequence belongs to the class-II aminoacyl-tRNA synthetase family. ProS type 1 subfamily. In terms of assembly, homodimer.

It is found in the cytoplasm. The catalysed reaction is tRNA(Pro) + L-proline + ATP = L-prolyl-tRNA(Pro) + AMP + diphosphate. Functionally, catalyzes the attachment of proline to tRNA(Pro) in a two-step reaction: proline is first activated by ATP to form Pro-AMP and then transferred to the acceptor end of tRNA(Pro). As ProRS can inadvertently accommodate and process non-cognate amino acids such as alanine and cysteine, to avoid such errors it has two additional distinct editing activities against alanine. One activity is designated as 'pretransfer' editing and involves the tRNA(Pro)-independent hydrolysis of activated Ala-AMP. The other activity is designated 'posttransfer' editing and involves deacylation of mischarged Ala-tRNA(Pro). The misacylated Cys-tRNA(Pro) is not edited by ProRS. The sequence is that of Proline--tRNA ligase from Heliobacterium modesticaldum (strain ATCC 51547 / Ice1).